The sequence spans 390 residues: Transforming growth factor beta-1 proprotein (390 aa).

Positions 1–29 (MPPSGLRLLPLLLPLPWLLVLTPGRPAAG) are cleaved as a signal peptide. Positions 30–74 (LSTCKTIDMELVKRKRIEAIRGQILSKLRLASPPSQGEVPPGPLP) are straightjacket domain. Residues 75–271 (EAVLALYNST…ATPLERAQHL (197 aa)) are arm domain. N-linked (GlcNAc...) asparagine glycosylation is found at Asn-82, Asn-136, and Asn-176. The tract at residues 226 to 252 (DSKDNVLHVEINGISPKRRGDLGTIHD) is bowtie tail. A Cell attachment site motif is present at residues 244-246 (RGD). Intrachain disulfides connect Cys-285-Cys-294, Cys-293-Cys-356, Cys-322-Cys-387, and Cys-326-Cys-389.

Belongs to the TGF-beta family. Homodimer; disulfide-linked. Interacts with the serine proteases, HTRA1 and HTRA3: the interaction with either inhibits TGFB1-mediated signaling and the HTRA protease activity is required for this inhibition. May interact with THSD4; this interaction may lead to sequestration by FBN1 microfibril assembly and attenuation of TGFB signaling. Interacts with CD109, DPT and ASPN. Interacts with EFEMP2. Interacts with TSKU; the interaction contributes to regulation of the hair cycle. Interacts with TGFBR3. As to quaternary structure, homodimer; disulfide-linked. Interacts with transforming growth factor beta-1 (TGF-beta-1) chain; interaction is non-covalent and maintains TGF-beta-1 in a latent state; each latency-associated peptide (LAP) monomer interacts with TGF-beta-1 in the other monomer. Interacts with LTBP1; leading to regulation of TGF-beta-1 activation. Interacts with LRRC32/GARP; leading to regulation of TGF-beta-1 activation on the surface of activated regulatory T-cells (Tregs). Interacts with LRRC33/NRROS; leading to regulation of TGF-beta-1 activation in macrophages and microglia. Interacts (via cell attachment site) with integrins ITGAV and ITGB6 (ITGAV:ITGB6), leading to release of the active TGF-beta-1. Interacts with NREP; the interaction results in a decrease in TGFB1 autoinduction. Interacts with HSP90AB1; inhibits latent TGFB1 activation. In terms of assembly, homodimer; disulfide-linked. Interacts with TGF-beta receptors (TGFBR1 and TGFBR2), leading to signal transduction. Transforming growth factor beta-1 proprotein: The precursor proprotein is cleaved in the Golgi apparatus by FURIN to form Transforming growth factor beta-1 (TGF-beta-1) and Latency-associated peptide (LAP) chains, which remain non-covalently linked, rendering TGF-beta-1 inactive. Post-translationally, N-glycosylated. Deglycosylation leads to activation of Transforming growth factor beta-1 (TGF-beta-1); mechanisms triggering deglycosylation-driven activation of TGF-beta-1 are however unclear. Abundant in the bone matrix. Expressed in cardiomyocytes.

The protein localises to the secreted. It localises to the extracellular space. It is found in the extracellular matrix. Transforming growth factor beta-1 proprotein: Precursor of the Latency-associated peptide (LAP) and Transforming growth factor beta-1 (TGF-beta-1) chains, which constitute the regulatory and active subunit of TGF-beta-1, respectively. In terms of biological role, required to maintain the Transforming growth factor beta-1 (TGF-beta-1) chain in a latent state during storage in extracellular matrix. Associates non-covalently with TGF-beta-1 and regulates its activation via interaction with 'milieu molecules', such as LTBP1, LRRC32/GARP and LRRC33/NRROS, that control activation of TGF-beta-1. Interaction with LRRC33/NRROS regulates activation of TGF-beta-1 in macrophages and microglia. Interaction with LRRC32/GARP controls activation of TGF-beta-1 on the surface of activated regulatory T-cells (Tregs). Interaction with integrins (ITGAV:ITGB6 or ITGAV:ITGB8) results in distortion of the Latency-associated peptide chain and subsequent release of the active TGF-beta-1. Its function is as follows. Multifunctional protein that regulates the growth and differentiation of various cell types and is involved in various processes, such as normal development, immune function, microglia function and responses to neurodegeneration. Activation into mature form follows different steps: following cleavage of the proprotein in the Golgi apparatus, Latency-associated peptide (LAP) and Transforming growth factor beta-1 (TGF-beta-1) chains remain non-covalently linked rendering TGF-beta-1 inactive during storage in extracellular matrix. At the same time, LAP chain interacts with 'milieu molecules', such as LTBP1, LRRC32/GARP and LRRC33/NRROS that control activation of TGF-beta-1 and maintain it in a latent state during storage in extracellular milieus. TGF-beta-1 is released from LAP by integrins (ITGAV:ITGB6 or ITGAV:ITGB8): integrin-binding to LAP stabilizes an alternative conformation of the LAP bowtie tail and results in distortion of the LAP chain and subsequent release of the active TGF-beta-1. Once activated following release of LAP, TGF-beta-1 acts by binding to TGF-beta receptors (TGFBR1 and TGFBR2), which transduce signal. While expressed by many cells types, TGF-beta-1 only has a very localized range of action within cell environment thanks to fine regulation of its activation by Latency-associated peptide chain (LAP) and 'milieu molecules'. Plays an important role in bone remodeling: acts as a potent stimulator of osteoblastic bone formation, causing chemotaxis, proliferation and differentiation in committed osteoblasts. Can promote either T-helper 17 cells (Th17) or regulatory T-cells (Treg) lineage differentiation in a concentration-dependent manner. At high concentrations, leads to FOXP3-mediated suppression of RORC and down-regulation of IL-17 expression, favoring Treg cell development. At low concentrations in concert with IL-6 and IL-21, leads to expression of the IL-17 and IL-23 receptors, favoring differentiation to Th17 cells. Stimulates sustained production of collagen through the activation of CREB3L1 by regulated intramembrane proteolysis (RIP). Mediates SMAD2/3 activation by inducing its phosphorylation and subsequent translocation to the nucleus. Positively regulates odontoblastic differentiation in dental papilla cells, via promotion of IPO7-mediated translocation of phosphorylated SMAD2 to the nucleus and subsequent transcription of target genes. Can induce epithelial-to-mesenchymal transition (EMT) and cell migration in various cell types. The protein is Transforming growth factor beta-1 proprotein (Tgfb1) of Rattus norvegicus (Rat).